The following is a 500-amino-acid chain: Potassium/proton antiporter CemA (500 aa).

Residues 129–149 (LFLTTIKTIFILFFVPFLVNF) form a helical membrane-spanning segment. The insert stretch occupies residues 204–354 (HQTHRDSKPL…GSLDSIKNKD (151 aa)). 3 consecutive transmembrane segments (helical) span residues 378-398 (ITNF…LITL), 425-445 (ILLI…ELFF), and 461-481 (IFLL…YLIF).

The protein belongs to the CemA family.

It is found in the plastid. It localises to the chloroplast inner membrane. It carries out the reaction K(+)(in) + H(+)(out) = K(+)(out) + H(+)(in). Its function is as follows. Contributes to K(+)/H(+) antiport activity by supporting proton efflux to control proton extrusion and homeostasis in chloroplasts in a light-dependent manner to modulate photosynthesis. Prevents excessive induction of non-photochemical quenching (NPQ) under continuous-light conditions. Indirectly promotes efficient inorganic carbon uptake into chloroplasts. The protein is Potassium/proton antiporter CemA of Chlamydomonas reinhardtii (Chlamydomonas smithii).